A 146-amino-acid chain; its full sequence is Hemoglobin subunit beta (146 aa).

Val1 bears the N-acetylvaline mark. One can recognise a Globin domain in the interval 2 to 146 (HLTADEKAAV…VANALAHKYH (145 aa)). The residue at position 12 (Thr12) is a Phosphothreonine. Ser44 carries the phosphoserine modification. The residue at position 59 (Lys59) is an N6-acetyllysine. Residue His63 participates in heme b binding. At Lys82 the chain carries N6-acetyllysine. His92 lines the heme b pocket. At Cys93 the chain carries S-nitrosocysteine. Residue Lys144 is modified to N6-acetyllysine.

The protein belongs to the globin family. In terms of assembly, heterotetramer of two alpha chains and two beta chains. As to expression, red blood cells.

Its function is as follows. Involved in oxygen transport from the lung to the various peripheral tissues. In Odobenus rosmarus divergens (Pacific walrus), this protein is Hemoglobin subunit beta (HBB).